The following is a 273-amino-acid chain: Pyrroline-5-carboxylate reductase (273 aa).

This sequence belongs to the pyrroline-5-carboxylate reductase family.

It is found in the cytoplasm. It carries out the reaction L-proline + NADP(+) = (S)-1-pyrroline-5-carboxylate + NADPH + 2 H(+). The catalysed reaction is L-proline + NAD(+) = (S)-1-pyrroline-5-carboxylate + NADH + 2 H(+). It participates in amino-acid biosynthesis; L-proline biosynthesis; L-proline from L-glutamate 5-semialdehyde: step 1/1. Catalyzes the reduction of 1-pyrroline-5-carboxylate (PCA) to L-proline. The sequence is that of Pyrroline-5-carboxylate reductase from Pseudomonas aeruginosa (strain ATCC 15692 / DSM 22644 / CIP 104116 / JCM 14847 / LMG 12228 / 1C / PRS 101 / PAO1).